The following is a 635-amino-acid chain: 1-deoxy-D-xylulose-5-phosphate synthase (635 aa).

Thiamine diphosphate contacts are provided by residues His-79 and 120 to 122 (GHS). A Mg(2+)-binding site is contributed by Asp-151. Thiamine diphosphate-binding positions include 152-153 (GA), Asn-182, Tyr-290, and Glu-372. Asn-182 is a binding site for Mg(2+).

Belongs to the transketolase family. DXPS subfamily. In terms of assembly, homodimer. It depends on Mg(2+) as a cofactor. Requires thiamine diphosphate as cofactor.

It carries out the reaction D-glyceraldehyde 3-phosphate + pyruvate + H(+) = 1-deoxy-D-xylulose 5-phosphate + CO2. It functions in the pathway metabolic intermediate biosynthesis; 1-deoxy-D-xylulose 5-phosphate biosynthesis; 1-deoxy-D-xylulose 5-phosphate from D-glyceraldehyde 3-phosphate and pyruvate: step 1/1. Catalyzes the acyloin condensation reaction between C atoms 2 and 3 of pyruvate and glyceraldehyde 3-phosphate to yield 1-deoxy-D-xylulose-5-phosphate (DXP). The protein is 1-deoxy-D-xylulose-5-phosphate synthase of Stenotrophomonas maltophilia (strain K279a).